Here is a 433-residue protein sequence, read N- to C-terminus: UDP-N-acetylglucosamine 1-carboxyvinyltransferase 1 (433 aa).

Residue 22-23 coordinates phosphoenolpyruvate; that stretch reads KN. R95 contributes to the UDP-N-acetyl-alpha-D-glucosamine binding site. C119 functions as the Proton donor in the catalytic mechanism. At C119 the chain carries 2-(S-cysteinyl)pyruvic acid O-phosphothioketal. Residues 124 to 128, D307, and V329 each bind UDP-N-acetyl-alpha-D-glucosamine; that span reads RPVDL.

This sequence belongs to the EPSP synthase family. MurA subfamily.

The protein resides in the cytoplasm. The catalysed reaction is phosphoenolpyruvate + UDP-N-acetyl-alpha-D-glucosamine = UDP-N-acetyl-3-O-(1-carboxyvinyl)-alpha-D-glucosamine + phosphate. It participates in cell wall biogenesis; peptidoglycan biosynthesis. Its function is as follows. Cell wall formation. Adds enolpyruvyl to UDP-N-acetylglucosamine. The polypeptide is UDP-N-acetylglucosamine 1-carboxyvinyltransferase 1 (Latilactobacillus sakei subsp. sakei (strain 23K) (Lactobacillus sakei subsp. sakei)).